A 62-amino-acid chain; its full sequence is Photosystem II reaction center protein Z (62 aa).

Helical transmembrane passes span 8–28 (AVFA…VVFA) and 41–61 (FSGT…NSLI).

The protein belongs to the PsbZ family. PSII is composed of 1 copy each of membrane proteins PsbA, PsbB, PsbC, PsbD, PsbE, PsbF, PsbH, PsbI, PsbJ, PsbK, PsbL, PsbM, PsbT, PsbY, PsbZ, Psb30/Ycf12, at least 3 peripheral proteins of the oxygen-evolving complex and a large number of cofactors. It forms dimeric complexes.

It is found in the plastid. The protein localises to the chloroplast thylakoid membrane. Functionally, may control the interaction of photosystem II (PSII) cores with the light-harvesting antenna, regulates electron flow through the 2 photosystem reaction centers. PSII is a light-driven water plastoquinone oxidoreductase, using light energy to abstract electrons from H(2)O, generating a proton gradient subsequently used for ATP formation. The protein is Photosystem II reaction center protein Z of Panax ginseng (Korean ginseng).